The primary structure comprises 250 residues: 5-oxoprolinase subunit A (250 aa).

The protein belongs to the LamB/PxpA family. As to quaternary structure, forms a complex composed of PxpA, PxpB and PxpC.

It catalyses the reaction 5-oxo-L-proline + ATP + 2 H2O = L-glutamate + ADP + phosphate + H(+). Functionally, catalyzes the cleavage of 5-oxoproline to form L-glutamate coupled to the hydrolysis of ATP to ADP and inorganic phosphate. This is 5-oxoprolinase subunit A from Streptomyces griseus subsp. griseus (strain JCM 4626 / CBS 651.72 / NBRC 13350 / KCC S-0626 / ISP 5235).